The sequence spans 185 residues: Ribosome-recycling factor (185 aa).

This sequence belongs to the RRF family.

The protein localises to the cytoplasm. In terms of biological role, responsible for the release of ribosomes from messenger RNA at the termination of protein biosynthesis. May increase the efficiency of translation by recycling ribosomes from one round of translation to another. The chain is Ribosome-recycling factor from Saccharophagus degradans (strain 2-40 / ATCC 43961 / DSM 17024).